The primary structure comprises 397 residues: Succinate--CoA ligase [ADP-forming] subunit beta (397 aa).

In terms of domain architecture, ATP-grasp spans 9–254 (KALLKGYGAP…ETEEDAKEIE (246 aa)). Residues lysine 46, 53–55 (GRG), glutamate 109, alanine 112, and glutamate 117 contribute to the ATP site. Positions 209 and 223 each coordinate Mg(2+). Substrate contacts are provided by residues asparagine 274 and 331-333 (GIM).

This sequence belongs to the succinate/malate CoA ligase beta subunit family. In terms of assembly, heterotetramer of two alpha and two beta subunits. The cofactor is Mg(2+).

The enzyme catalyses succinate + ATP + CoA = succinyl-CoA + ADP + phosphate. It carries out the reaction GTP + succinate + CoA = succinyl-CoA + GDP + phosphate. The protein operates within carbohydrate metabolism; tricarboxylic acid cycle; succinate from succinyl-CoA (ligase route): step 1/1. Functionally, succinyl-CoA synthetase functions in the citric acid cycle (TCA), coupling the hydrolysis of succinyl-CoA to the synthesis of either ATP or GTP and thus represents the only step of substrate-level phosphorylation in the TCA. The beta subunit provides nucleotide specificity of the enzyme and binds the substrate succinate, while the binding sites for coenzyme A and phosphate are found in the alpha subunit. This is Succinate--CoA ligase [ADP-forming] subunit beta from Agrobacterium fabrum (strain C58 / ATCC 33970) (Agrobacterium tumefaciens (strain C58)).